The following is a 462-amino-acid chain: MAAPELKGTRVTVVGLAKSGVAAARLCAREGARVTVTDRRGEAALGGALAALPASVTRRLGGHDAADFTGADLVVASPGVPLANPEIQAARRRGVPVWGEVELAARFLGGLPIVGITGTNGKSTTTALTGALLARHRRTFVGGNLGTPLSELVLSGEPAAAAVVELSSFQLEGIERFRARVAAVLNVTPDHLDRYPDVDAYAAAKARLFATQEPDDVAVANARDPRALAMAGASRGDLHTFGFGAPVPASARDEGGEPGPGGTAIWYTPRGRAPERYQLHNRALRGRHNRENAMAAVLCARLMGVPGEAVQAGLDAFPGLHHRLELVAEGRGVEWVNDSKATNVDSTFVGLAAFPAGAPRVVLIMGGRGKKAPYAPLRPLFGGRVKALLTIGEDAPAIERELGDLAPTEPCGDLPGAVRRAAVLSGPGDVVLLSPACASYDQFASYEERGEAFRRLATEQAR.

Gly118–Thr124 is an ATP binding site.

It belongs to the MurCDEF family.

The protein resides in the cytoplasm. The enzyme catalyses UDP-N-acetyl-alpha-D-muramoyl-L-alanine + D-glutamate + ATP = UDP-N-acetyl-alpha-D-muramoyl-L-alanyl-D-glutamate + ADP + phosphate + H(+). Its pathway is cell wall biogenesis; peptidoglycan biosynthesis. Functionally, cell wall formation. Catalyzes the addition of glutamate to the nucleotide precursor UDP-N-acetylmuramoyl-L-alanine (UMA). This is UDP-N-acetylmuramoylalanine--D-glutamate ligase from Anaeromyxobacter dehalogenans (strain 2CP-C).